Consider the following 380-residue polypeptide: MKNISLLGASGSIGTQTLDVLRSHPDQFRLVAFSVGKNIDYAVKVIQEFSPQIVSVQREEDVLKLQAVSGNTKIVYGSEGLLEVALHPDAEIVVNAVVGSVGLLPTLRAIEAKKTIGIANKETLVTAGHLVMEAARKHNVSLLPVDSEHSAIFQCLNGENEKRISRLIITASGGSFRDKTRDELHHVTVEDALRHPNWSMGSKITIDSATMMNKGLEVIEAHWLFGIPYEQIDVVLHKESIIHSMVEFEDRSVMAQLGSPDMRVPIQYALTYPDRLPLSDTKQLNLWEMGTLHFEKMNQERFRCLRFAYEAGKTGGSMPAVMNAANEVAVEAFLQKRIGFLTVEDLIEKAMNHHNVIARPSLEEILEIDATTRRFVMEQI.

NADPH is bound by residues S10, G11, S12, I13, G36, K37, N38, and N120. K121 is a 1-deoxy-D-xylulose 5-phosphate binding site. NADPH is bound at residue E122. Position 146 (D146) interacts with Mn(2+). 4 residues coordinate 1-deoxy-D-xylulose 5-phosphate: S147, E148, S172, and H195. Residue E148 coordinates Mn(2+). Position 201 (G201) interacts with NADPH. 1-deoxy-D-xylulose 5-phosphate contacts are provided by S208, N213, K214, and E217. E217 is a binding site for Mn(2+).

This sequence belongs to the DXR family. Requires Mg(2+) as cofactor. Mn(2+) is required as a cofactor.

It carries out the reaction 2-C-methyl-D-erythritol 4-phosphate + NADP(+) = 1-deoxy-D-xylulose 5-phosphate + NADPH + H(+). The protein operates within isoprenoid biosynthesis; isopentenyl diphosphate biosynthesis via DXP pathway; isopentenyl diphosphate from 1-deoxy-D-xylulose 5-phosphate: step 1/6. Functionally, catalyzes the NADPH-dependent rearrangement and reduction of 1-deoxy-D-xylulose-5-phosphate (DXP) to 2-C-methyl-D-erythritol 4-phosphate (MEP). This is 1-deoxy-D-xylulose 5-phosphate reductoisomerase from Bacillus cereus (strain ATCC 10987 / NRS 248).